The primary structure comprises 416 residues: Catalase-peroxidase 2 (416 aa).

Residues 1–20 (MLLPLIVFLLSVLIHHRIYS) form the signal peptide.

It belongs to the peroxidase family. Peroxidase/catalase subfamily. Homodimer or homotetramer. Heme b is required as a cofactor. Post-translationally, formation of the three residue Trp-Tyr-Met cross-link is important for the catalase, but not the peroxidase activity of the enzyme.

The catalysed reaction is H2O2 + AH2 = A + 2 H2O. The enzyme catalyses 2 H2O2 = O2 + 2 H2O. Its function is as follows. Bifunctional enzyme with both catalase and broad-spectrum peroxidase activity. This chain is Catalase-peroxidase 2 (katG2), found in Alkaliphilus metalliredigens (strain QYMF).